The chain runs to 216 residues: tRNA (guanine-N(7)-)-methyltransferase (216 aa).

The S-adenosyl-L-methionine site is built by Glu-44, Glu-69, Asn-96, and Asp-118. The active site involves Asp-118. Lys-122 provides a ligand contact to substrate. The interval 124–129 (RHEKRR) is interaction with RNA. Substrate is bound by residues Asp-154 and 191-194 (TEYE).

This sequence belongs to the class I-like SAM-binding methyltransferase superfamily. TrmB family.

The enzyme catalyses guanosine(46) in tRNA + S-adenosyl-L-methionine = N(7)-methylguanosine(46) in tRNA + S-adenosyl-L-homocysteine. The protein operates within tRNA modification; N(7)-methylguanine-tRNA biosynthesis. Catalyzes the formation of N(7)-methylguanine at position 46 (m7G46) in tRNA. The sequence is that of tRNA (guanine-N(7)-)-methyltransferase from Geobacillus thermodenitrificans (strain NG80-2).